The sequence spans 860 residues: MQEQYRPEEIESKVQLHWDEKRTFEVTEDESKEKYYCLSMLPYPSGRLHMGHVRNYTIGDVIARYQRMLGKNVLQPIGWDAFGLPAEGAAVKNNTAPAPWTYDNIAYMKNQLKMLGFGYDWSRELATCTPEYYRWEQKFFTELYKKGLVYKKTSAVNWCPNDQTVLANEQVIDGCCWRCDTKVERKEIPQWFIKITAYADELLNDLDKLDHWPDTVKTMQRNWIGRSEGVEITFNVNDYDNTLTVYTTRPDTFMGCTYLAVAAGHPLAQKAAENNPELAAFIDECRNTKVAEAEMATMEKKGVDTGFKAVHPLTGEEIPVWAANFVLMEYGTGAVMAVPGHDQRDYEFASKYGLNIKPVILAADGSEPDLSQQALTEKGVLFNSGEFNGLDHEAAFNAIADKLTAMGVGERKVNYRLRDWGVSRQRYWGAPIPMVTLEDGTVMPTPDDQLPVILPEDVVMDGITSPIKADPEWAKTTVNGMPALRETDTFDTFMESSWYYARYTCPQYKEGMLDSKAANYWLPVDIYIGGIEHAIMHLLYFRFFHKLMRDAGMVNSDEPAKQLLCQGMVLADAFYYVGENGERNWVSPVDAIVERDEKGRIVKAKDAAGHELVYTGMSKMSKSKNNGIDPQVMVERYGADTVRLFMMFASPADMTLEWQESGVEGANRFLKRVWKLVYEHTAKGDVAALNVDALTEDQKALRRDVHKTIAKVTDDIGRRQTFNTAIAAIMELMNKLAKAPTDGEQDRALMQEALLAVVRMLNPFTPHICFTLWQELKGEGDIDNAPWPVADEKAMVEDSTLVVVQVNGKVRAKITVPVDATEEQVRERAGQEHLVAKYLDGVTVRKVIYVPGKLLNLVVG.

The short motif at 42–52 (PYPSGRLHMGH) is the 'HIGH' region element. The 'KMSKS' region signature appears at 619–623 (KMSKS). Residue lysine 622 participates in ATP binding.

The protein belongs to the class-I aminoacyl-tRNA synthetase family.

It is found in the cytoplasm. The catalysed reaction is tRNA(Leu) + L-leucine + ATP = L-leucyl-tRNA(Leu) + AMP + diphosphate. This Escherichia coli O127:H6 (strain E2348/69 / EPEC) protein is Leucine--tRNA ligase.